We begin with the raw amino-acid sequence, 92 residues long: C-C motif chemokine 3 (92 aa).

The signal sequence occupies residues 1–23; sequence MKVSTAALAVLLCTMALWNEVFS. Disulfide bonds link cysteine 34-cysteine 57 and cysteine 35-cysteine 73.

The protein belongs to the intercrine beta (chemokine CC) family. As to quaternary structure, self-associates. Also heterodimer of MIP-1-alpha(4-69) and MIP-1-beta(3-69). Interacts with CCR1.

It is found in the secreted. Functionally, monokine with inflammatory and chemokinetic properties. Binds to CCR1, CCR4 and CCR5. One of the major HIV-suppressive factors produced by CD8+ T-cells. Recombinant MIP-1-alpha induces a dose-dependent inhibition of different strains of HIV-1, HIV-2, and simian immunodeficiency virus (SIV). This chain is C-C motif chemokine 3 (Ccl3), found in Rattus norvegicus (Rat).